The chain runs to 264 residues: Thymidylate synthase (264 aa).

Residue Arg-21 coordinates dUMP. His-51 contacts (6R)-5,10-methylene-5,6,7,8-tetrahydrofolate. DUMP is bound at residue 126–127; it reads RR. Cys-146 (nucleophile) is an active-site residue. DUMP contacts are provided by residues 166–169, Asn-177, and 207–209; these read RSAD and HLY. Residue Asp-169 participates in (6R)-5,10-methylene-5,6,7,8-tetrahydrofolate binding. Position 263 (Ala-263) interacts with (6R)-5,10-methylene-5,6,7,8-tetrahydrofolate.

It belongs to the thymidylate synthase family. Bacterial-type ThyA subfamily. In terms of assembly, homodimer.

The protein resides in the cytoplasm. It catalyses the reaction dUMP + (6R)-5,10-methylene-5,6,7,8-tetrahydrofolate = 7,8-dihydrofolate + dTMP. Its pathway is pyrimidine metabolism; dTTP biosynthesis. Its function is as follows. Catalyzes the reductive methylation of 2'-deoxyuridine-5'-monophosphate (dUMP) to 2'-deoxythymidine-5'-monophosphate (dTMP) while utilizing 5,10-methylenetetrahydrofolate (mTHF) as the methyl donor and reductant in the reaction, yielding dihydrofolate (DHF) as a by-product. This enzymatic reaction provides an intracellular de novo source of dTMP, an essential precursor for DNA biosynthesis. The protein is Thymidylate synthase of Stutzerimonas stutzeri (strain A1501) (Pseudomonas stutzeri).